The chain runs to 111 residues: UPF0060 membrane protein XAC3064 (111 aa).

Helical transmembrane passes span 8–28 (LLLFAATALAELVGCYLPYLW), 32–52 (GGSVWLLLPTALSLAVFVWLL), 64–84 (AAYGGVYIASALLWLWWVDGV), and 91–111 (LLGAACCLLGMAVIMFSPRSA).

This sequence belongs to the UPF0060 family.

Its subcellular location is the cell inner membrane. This Xanthomonas axonopodis pv. citri (strain 306) protein is UPF0060 membrane protein XAC3064.